Here is a 164-residue protein sequence, read N- to C-terminus: NADH-quinone oxidoreductase subunit I (164 aa).

2 4Fe-4S ferredoxin-type domains span residues 55-85 (LRRYPNGEERCIACKLCEAICPAQAITIDAE) and 95-124 (TRYDIDMTKCIYCGFCQEACPVDAIVEGPN). 8 residues coordinate [4Fe-4S] cluster: Cys65, Cys68, Cys71, Cys75, Cys104, Cys107, Cys110, and Cys114.

Belongs to the complex I 23 kDa subunit family. In terms of assembly, NDH-1 is composed of 14 different subunits. Subunits NuoA, H, J, K, L, M, N constitute the membrane sector of the complex. Requires [4Fe-4S] cluster as cofactor.

Its subcellular location is the cell inner membrane. It catalyses the reaction a quinone + NADH + 5 H(+)(in) = a quinol + NAD(+) + 4 H(+)(out). Functionally, NDH-1 shuttles electrons from NADH, via FMN and iron-sulfur (Fe-S) centers, to quinones in the respiratory chain. The immediate electron acceptor for the enzyme in this species is believed to be ubiquinone. Couples the redox reaction to proton translocation (for every two electrons transferred, four hydrogen ions are translocated across the cytoplasmic membrane), and thus conserves the redox energy in a proton gradient. The chain is NADH-quinone oxidoreductase subunit I from Dinoroseobacter shibae (strain DSM 16493 / NCIMB 14021 / DFL 12).